The following is an 877-amino-acid chain: Putative ankyrin repeat protein R748 (877 aa).

6 ANK repeats span residues 44–74 (IRHI…TINV), 79–109 (QNNT…NINY), 115–145 (IGIS…AIQQ), 202–231 (MGYR…SINE), 243–272 (NNND…PIHM), and 282–311 (LVPT…SIQA). Residues 525–579 (DSDEDPVCDSNESDNSNDINNHVKSDNKLNSSNDYYDEDDSEDNYNNQSDDEPLV) are disordered. Residues 533-544 (DSNESDNSNDIN) are compositionally biased toward low complexity.

In Acanthamoeba polyphaga mimivirus (APMV), this protein is Putative ankyrin repeat protein R748.